A 479-amino-acid chain; its full sequence is Glutamate--tRNA ligase (479 aa).

The short motif at 21–31 (PSPTGYLHVGG) is the 'HIGH' region element. Residues 248–252 (KLSKR) carry the 'KMSKS' region motif. Lys-251 serves as a coordination point for ATP.

The protein belongs to the class-I aminoacyl-tRNA synthetase family. Glutamate--tRNA ligase type 1 subfamily. As to quaternary structure, monomer.

Its subcellular location is the cytoplasm. The enzyme catalyses tRNA(Glu) + L-glutamate + ATP = L-glutamyl-tRNA(Glu) + AMP + diphosphate. In terms of biological role, catalyzes the attachment of glutamate to tRNA(Glu) in a two-step reaction: glutamate is first activated by ATP to form Glu-AMP and then transferred to the acceptor end of tRNA(Glu). This Haemophilus ducreyi (strain 35000HP / ATCC 700724) protein is Glutamate--tRNA ligase.